Consider the following 904-residue polypeptide: Dynamin-like protein C (904 aa).

Residues I44 to L102 are a coiled coil. Residues H53–S93 form a disordered region. Positions R67–D90 are enriched in basic and acidic residues. A Dynamin-type G domain is found at S119–P441. A G1 motif region spans residues G129–S136. G129 to S136 contributes to the GTP binding site. The segment at G155 to R157 is G2 motif. Residues S169–K227 are disordered. A compositionally biased stretch (low complexity) spans S183–S213. The G3 motif stretch occupies residues D278–G281. GTP contacts are provided by residues D278 to F282 and T343 to D346. The interval T343–D346 is G4 motif. The interval L378–K381 is G5 motif. Residues E781–F811 are a coiled coil. Disordered stretches follow at residues S821–S840 and N853–N904. The segment covering N853–S876 has biased composition (polar residues). The span at N877–Q891 shows a compositional bias: low complexity.

It belongs to the TRAFAC class dynamin-like GTPase superfamily. Dynamin/Fzo/YdjA family.

It localises to the cytoplasm. The enzyme catalyses GTP + H2O = GDP + phosphate + H(+). Functionally, involved in cytokinesis. May hydrolyze GTP. This is Dynamin-like protein C (dlpC) from Dictyostelium discoideum (Social amoeba).